Consider the following 356-residue polypeptide: Arginine kinase (356 aa).

The Phosphagen kinase N-terminal domain occupies 8-91 (EKLEAGFKKL…FDPIIEDYHG (84 aa)). 64-68 (GVGIY) lines the substrate pocket. The Phosphagen kinase C-terminal domain occupies 119-356 (YVISTRVRCG…LELIKIEGSL (238 aa)). Residues 122-126 (STRVR) and His-185 contribute to the ATP site. Substrate is bound at residue Glu-225. Arg-229 is an ATP binding site. Position 271 (Cys-271) interacts with substrate. ATP-binding positions include 280–284 (RASVH) and 309–314 (RGSTGE). Substrate is bound at residue Glu-314.

Belongs to the ATP:guanido phosphotransferase family.

The catalysed reaction is L-arginine + ATP = N(omega)-phospho-L-arginine + ADP + H(+). This is Arginine kinase (ARGK) from Schistocerca americana (American grasshopper).